The primary structure comprises 797 residues: GDH/6PGL endoplasmic bifunctional protein (797 aa).

An N-terminal signal peptide occupies residues 1-24 (MKCPGVWGMLTVTMCVVFLGCPQA). Q25 carries the post-translational modification Pyrrolidone carboxylic acid. The interval 25–531 (QELQGHVSVI…SGSHLSFSLG (507 aa)) is hexose-6-phosphate dehydrogenase. NADP(+) contacts are provided by residues 37–44 (GATGDLAK) and Y154. N162 is a glycosylation site (N-linked (GlcNAc...) asparagine). K179 is an NADP(+) binding site. D-glucose 6-phosphate contacts are provided by residues K179, 209–213 (HYLGK), E248, and D267. An N6-succinyllysine modification is found at K213. H272 (proton acceptor) is an active-site residue. N-linked (GlcNAc...) asparagine glycosylation is present at N287. K365 and R370 together coordinate D-glucose 6-phosphate. R375 contacts NADP(+). A linker region spans residues 532–545 (QPEQLVPGPGSTPR). The segment at 546–797 (PSDFQVLGAK…WYMDYEAFLG (252 aa)) is 6-phosphogluconolactonase. An NADP(+)-binding site is contributed by W623. Residue N689 is glycosylated (N-linked (GlcNAc...) asparagine).

In the N-terminal section; belongs to the glucose-6-phosphate dehydrogenase family. It in the C-terminal section; belongs to the glucosamine/galactosamine-6-phosphate isomerase family. 6-phosphogluconolactonase subfamily. Homodimer.

It is found in the endoplasmic reticulum lumen. The catalysed reaction is D-glucose 6-phosphate + NAD(+) = 6-phospho-D-glucono-1,5-lactone + NADH + H(+). The enzyme catalyses D-glucose 6-phosphate + NADP(+) = 6-phospho-D-glucono-1,5-lactone + NADPH + H(+). It catalyses the reaction 6-phospho-D-glucono-1,5-lactone + H2O = 6-phospho-D-gluconate + H(+). It carries out the reaction 2-deoxy-D-glucose 6-phosphate + NAD(+) = 2-deoxy-6-phospho-D-glucono-1,5-lactone + NADH + H(+). The catalysed reaction is 2-deoxy-D-glucose 6-phosphate + NADP(+) = 2-deoxy-6-phospho-D-glucono-1,5-lactone + NADPH + H(+). The enzyme catalyses D-galactose 6-phosphate + NADP(+) = 6-phospho-D-galactono-1,5-lactone + NADPH + H(+). It catalyses the reaction D-galactose 6-phosphate + NAD(+) = 6-phospho-D-galactono-1,5-lactone + NADH + H(+). It carries out the reaction D-glucosamine 6-phosphate + NADP(+) = 2-amino-2-deoxy-6-phospho-D-glucono-1,5-lactone + NADPH + 2 H(+). The catalysed reaction is D-glucose + NAD(+) = D-glucono-1,5-lactone + NADH + H(+). The enzyme catalyses D-glucose + NADP(+) = D-glucono-1,5-lactone + NADPH + H(+). It catalyses the reaction D-glucose 6-sulfate + NADP(+) = 6-sulfo-D-glucono-1,5-lactone + NADPH + H(+). It functions in the pathway carbohydrate degradation; pentose phosphate pathway; D-ribulose 5-phosphate from D-glucose 6-phosphate (oxidative stage). It participates in carbohydrate degradation; pentose phosphate pathway; D-ribulose 5-phosphate from D-glucose 6-phosphate (oxidative stage): step 2/3. Its function is as follows. Bifunctional enzyme localized in the lumen of the endoplasmic reticulum that catalyzes the first two steps of the oxidative branch of the pentose phosphate pathway/shunt, an alternative to glycolysis and a major source of reducing power and metabolic intermediates for biosynthetic processes. Has a hexose-6-phosphate dehydrogenase activity, with broad substrate specificity compared to glucose-6-phosphate 1-dehydrogenase/G6PD, and catalyzes the first step of the pentose phosphate pathway. In addition, acts as a 6-phosphogluconolactonase and catalyzes the second step of the pentose phosphate pathway. May have a dehydrogenase activity for alternative substrates including glucosamine 6-phosphate and glucose 6-sulfate. The main function of this enzyme is to provide reducing equivalents such as NADPH to maintain the adequate levels of reductive cofactors in the oxidizing environment of the endoplasmic reticulum. By producing NADPH that is needed by reductases of the lumen of the endoplasmic reticulum like corticosteroid 11-beta-dehydrogenase isozyme 1/HSD11B1, indirectly regulates their activity. In Oryctolagus cuniculus (Rabbit), this protein is GDH/6PGL endoplasmic bifunctional protein.